The primary structure comprises 334 residues: Sucrose operon repressor (334 aa).

One can recognise an HTH lacI-type domain in the interval 6–63 (VTIKDIAELAGVSKATASLVLNGRGKELRVAQETRERVLAIAREQHYQPSIHARSLRD). The H-T-H motif DNA-binding region spans 8–27 (IKDIAELAGVSKATASLVLN).

In terms of biological role, repressor for the scr operon. Binds D-fructose as an inducer. This Klebsiella pneumoniae protein is Sucrose operon repressor (scrR).